The chain runs to 272 residues: Shikimate dehydrogenase (NADP(+)) (272 aa).

Residues 14–16 (SKS) and T61 each bind shikimate. Catalysis depends on K65, which acts as the Proton acceptor. Residue E77 participates in NADP(+) binding. N86 and D102 together coordinate shikimate. Residues 126 to 130 (GAGGA), 149 to 154 (NRTASR), and M213 each bind NADP(+). Y215 contacts shikimate. G237 provides a ligand contact to NADP(+).

The protein belongs to the shikimate dehydrogenase family. Homodimer.

The enzyme catalyses shikimate + NADP(+) = 3-dehydroshikimate + NADPH + H(+). The protein operates within metabolic intermediate biosynthesis; chorismate biosynthesis; chorismate from D-erythrose 4-phosphate and phosphoenolpyruvate: step 4/7. Its function is as follows. Involved in the biosynthesis of the chorismate, which leads to the biosynthesis of aromatic amino acids. Catalyzes the reversible NADPH linked reduction of 3-dehydroshikimate (DHSA) to yield shikimate (SA). The protein is Shikimate dehydrogenase (NADP(+)) of Salmonella schwarzengrund (strain CVM19633).